The following is a 462-amino-acid chain: Toxin CqTX-A (462 aa).

Positions 1 to 19 are cleaved as a signal peptide; the sequence is MANMLYFSLLALLFMTGIA. Residue N174 is glycosylated (N-linked (GlcNAc...) asparagine).

Belongs to the jellyfish toxin family. Type I subfamily. Contains disulfide bonds. In terms of processing, N-glycosylated.

The protein resides in the secreted. The protein localises to the nematocyst. It is found in the target cell membrane. Its function is as follows. Critical allergen and main toxic protein of C.quadrigatus venom. Has potent hemolytic activity. Is lethal to crayfish. Causes cutaneous inflammation in humans. May act as a pore-forming toxin, disrupting normal transmembrane ion concentration gradients in susceptible cells. The sequence is that of Toxin CqTX-A from Chiropsoides quadrigatus (Box jellyfish).